We begin with the raw amino-acid sequence, 448 residues long: Exodeoxyribonuclease 7 large subunit (448 aa).

It belongs to the XseA family. In terms of assembly, heterooligomer composed of large and small subunits.

Its subcellular location is the cytoplasm. It carries out the reaction Exonucleolytic cleavage in either 5'- to 3'- or 3'- to 5'-direction to yield nucleoside 5'-phosphates.. Its function is as follows. Bidirectionally degrades single-stranded DNA into large acid-insoluble oligonucleotides, which are then degraded further into small acid-soluble oligonucleotides. This Hamiltonella defensa subsp. Acyrthosiphon pisum (strain 5AT) protein is Exodeoxyribonuclease 7 large subunit.